A 314-amino-acid polypeptide reads, in one-letter code: Methionyl-tRNA formyltransferase (314 aa).

Position 109-112 (109-112 (SLLP)) interacts with (6S)-5,6,7,8-tetrahydrofolate.

It belongs to the Fmt family.

It catalyses the reaction L-methionyl-tRNA(fMet) + (6R)-10-formyltetrahydrofolate = N-formyl-L-methionyl-tRNA(fMet) + (6S)-5,6,7,8-tetrahydrofolate + H(+). Functionally, attaches a formyl group to the free amino group of methionyl-tRNA(fMet). The formyl group appears to play a dual role in the initiator identity of N-formylmethionyl-tRNA by promoting its recognition by IF2 and preventing the misappropriation of this tRNA by the elongation apparatus. The chain is Methionyl-tRNA formyltransferase from Alkaliphilus metalliredigens (strain QYMF).